Consider the following 203-residue polypeptide: Phosphatidylglycerophosphatase B (203 aa).

A topological domain (cytoplasmic) is located at residue methionine 1. The helical transmembrane segment at 2–17 (YKPVSLFLFFLILAAA) threads the bilayer. Residues 18-55 (IHTNAVQSADEAISKAAVLIRQPWLNEVMTGITHLGAS) are Extracellular-facing. The chain crosses the membrane as a helical span at residues 56 to 74 (SFLLPLIVIIGAGMFFYRK). Residues 75-78 (TWDG) lie on the Cytoplasmic side of the membrane. A helical transmembrane segment spans residues 79 to 99 (LLMLLVFGTDRLLNKVLKEWI). The segment at 96–104 (KEWIERVRP) is phosphatase sequence motif I. Residues 100-119 (ERVRPDFAPLVHESSFSFPS) lie on the Extracellular side of the membrane. The interval 118-121 (PSGH) is phosphatase sequence motif II. Residues 120–139 (GHSMNAACVYPVIAYFLVKH) traverse the membrane as a helical segment. Histidine 121 (proton donors) is an active-site residue. Residues 140 to 146 (LPFLSKH) lie on the Cytoplasmic side of the membrane. A helical transmembrane segment spans residues 147–167 (KKMVYIIAGVIAVLVGISRVY). The tract at residues 164–175 (SRVYLGVHFVTD) is phosphatase sequence motif III. Topologically, residues 168 to 172 (LGVHF) are extracellular. Histidine 171 (nucleophile) is an active-site residue. Residues 173–196 (VTDVLGGFSLGLLLFFLVKGFDEK) traverse the membrane as a helical segment. The Cytoplasmic segment spans residues 197–203 (IKRFRQK).

It belongs to the PA-phosphatase related phosphoesterase family.

Its subcellular location is the cell membrane. The catalysed reaction is a 1,2-diacyl-sn-glycero-3-phospho-(1'-sn-glycero-3'-phosphate) + H2O = a 1,2-diacyl-sn-glycero-3-phospho-(1'-sn-glycerol) + phosphate. Functionally, catalyzes the dephosphorylation of phosphatidylglycerophosphate (PGP) to phosphatidylglycerol. Also has undecaprenyl pyrophosphate phosphatase activity, required for the biosynthesis of the lipid carrier undecaprenyl phosphate. This Bacillus subtilis (strain 168) protein is Phosphatidylglycerophosphatase B.